Reading from the N-terminus, the 276-residue chain is F420-dependent methylenetetrahydromethanopterin dehydrogenase (276 aa).

Residues 253–276 (TVLRTPHGKEGKTLSKKDLLAKPE) form a disordered region. The segment covering 259 to 276 (HGKEGKTLSKKDLLAKPE) has biased composition (basic and acidic residues).

Belongs to the MTD family. As to quaternary structure, found to be tightly associated with methyl-coenzyme M methylreductase.

It catalyses the reaction 5,10-methylenetetrahydromethanopterin + oxidized coenzyme F420-(gamma-L-Glu)(n) + 2 H(+) = 5,10-methenyl-5,6,7,8-tetrahydromethanopterin + reduced coenzyme F420-(gamma-L-Glu)(n). It functions in the pathway one-carbon metabolism; methanogenesis from CO(2); 5,10-methylene-5,6,7,8-tetrahydromethanopterin from 5,10-methenyl-5,6,7,8-tetrahydromethanopterin (coenzyme F420 route): step 1/1. Its activity is regulated as follows. Activity requires salt; 100 mM sodium or potassium salts of chloride, phosphate or sulfate are equally effective. Not inactivated by O(2). Inhibited by hydrogen-producing 5,10-methenyltetrahydromethanopterin hydrogenase which has a higher affinity for their shared substrate. Enzyme is O(2)-stable and strictly dependent on coenzyme F420. Its function is as follows. Catalyzes the reversible reduction of methenyl-H(4)MPT(+) to methylene-H(4)MPT. The sequence is that of F420-dependent methylenetetrahydromethanopterin dehydrogenase from Methanothermobacter marburgensis (strain ATCC BAA-927 / DSM 2133 / JCM 14651 / NBRC 100331 / OCM 82 / Marburg) (Methanobacterium thermoautotrophicum).